The sequence spans 464 residues: Glucose-6-phosphate isomerase (464 aa).

The Proton donor role is filled by Glu290. Active-site residues include His319 and Lys433.

This sequence belongs to the GPI family.

The protein resides in the cytoplasm. The catalysed reaction is alpha-D-glucose 6-phosphate = beta-D-fructose 6-phosphate. It functions in the pathway carbohydrate biosynthesis; gluconeogenesis. Its pathway is carbohydrate degradation; glycolysis; D-glyceraldehyde 3-phosphate and glycerone phosphate from D-glucose: step 2/4. In terms of biological role, catalyzes the reversible isomerization of glucose-6-phosphate to fructose-6-phosphate. The chain is Glucose-6-phosphate isomerase from Carboxydothermus hydrogenoformans (strain ATCC BAA-161 / DSM 6008 / Z-2901).